Reading from the N-terminus, the 230-residue chain is UPF0502 protein Patl_1161 (230 aa).

Belongs to the UPF0502 family.

The sequence is that of UPF0502 protein Patl_1161 from Pseudoalteromonas atlantica (strain T6c / ATCC BAA-1087).